Consider the following 118-residue polypeptide: UPF0342 protein ABC1519 (118 aa).

Belongs to the UPF0342 family.

This chain is UPF0342 protein ABC1519, found in Shouchella clausii (strain KSM-K16) (Alkalihalobacillus clausii).